The primary structure comprises 619 residues: 1-deoxy-D-xylulose-5-phosphate synthase (619 aa).

Thiamine diphosphate is bound by residues histidine 74 and 115–117 (GHS). Mg(2+) is bound at residue aspartate 146. Residues 147–148 (GA), asparagine 175, tyrosine 285, and glutamate 365 contribute to the thiamine diphosphate site. Mg(2+) is bound at residue asparagine 175.

The protein belongs to the transketolase family. DXPS subfamily. In terms of assembly, homodimer. Mg(2+) is required as a cofactor. Thiamine diphosphate serves as cofactor.

The catalysed reaction is D-glyceraldehyde 3-phosphate + pyruvate + H(+) = 1-deoxy-D-xylulose 5-phosphate + CO2. Its pathway is metabolic intermediate biosynthesis; 1-deoxy-D-xylulose 5-phosphate biosynthesis; 1-deoxy-D-xylulose 5-phosphate from D-glyceraldehyde 3-phosphate and pyruvate: step 1/1. Its function is as follows. Catalyzes the acyloin condensation reaction between C atoms 2 and 3 of pyruvate and glyceraldehyde 3-phosphate to yield 1-deoxy-D-xylulose-5-phosphate (DXP). This chain is 1-deoxy-D-xylulose-5-phosphate synthase, found in Clostridium perfringens (strain 13 / Type A).